A 351-amino-acid polypeptide reads, in one-letter code: Adenine deaminase (351 aa).

Zn(2+) contacts are provided by H20, H22, and H200. E203 acts as the Proton donor in catalysis. D281 provides a ligand contact to Zn(2+). D282 contacts substrate.

The protein belongs to the metallo-dependent hydrolases superfamily. Adenosine and AMP deaminases family. Adenine deaminase type 2 subfamily. It depends on Zn(2+) as a cofactor.

It catalyses the reaction adenine + H2O + H(+) = hypoxanthine + NH4(+). Its function is as follows. Catalyzes the hydrolytic deamination of adenine to hypoxanthine. Plays an important role in the purine salvage pathway and in nitrogen catabolism. The protein is Adenine deaminase of Cupriavidus necator (strain ATCC 17699 / DSM 428 / KCTC 22496 / NCIMB 10442 / H16 / Stanier 337) (Ralstonia eutropha).